A 304-amino-acid polypeptide reads, in one-letter code: Non-specific ribonucleoside hydrolase RihC (304 aa).

Residue histidine 233 is part of the active site.

It belongs to the IUNH family. RihC subfamily.

Hydrolyzes both purine and pyrimidine ribonucleosides with a broad-substrate specificity. The chain is Non-specific ribonucleoside hydrolase RihC from Escherichia coli (strain SMS-3-5 / SECEC).